Here is a 369-residue protein sequence, read N- to C-terminus: GTPase Obg (369 aa).

The region spanning 1–159 (MKFIDEAKIE…RELRLELKVL (159 aa)) is the Obg domain. The disordered stretch occupies residues 128–148 (IHFKSSTNRAPRQKSEGKEGE). An OBG-type G domain is found at 160-333 (ADIGLLGMPN…LVTEIYEYIA (174 aa)). Residues 166–173 (GMPNAGKS), 191–195 (FTTLH), 213–216 (DIPG), 283–286 (NKLD), and 314–316 (SAL) each bind GTP. 2 residues coordinate Mg(2+): S173 and T193.

The protein belongs to the TRAFAC class OBG-HflX-like GTPase superfamily. OBG GTPase family. Monomer. Mg(2+) is required as a cofactor.

It is found in the cytoplasm. An essential GTPase which binds GTP, GDP and possibly (p)ppGpp with moderate affinity, with high nucleotide exchange rates and a fairly low GTP hydrolysis rate. Plays a role in control of the cell cycle, stress response, ribosome biogenesis and in those bacteria that undergo differentiation, in morphogenesis control. In Janthinobacterium sp. (strain Marseille) (Minibacterium massiliensis), this protein is GTPase Obg.